Consider the following 542-residue polypeptide: CTP synthase (542 aa).

The interval 1–265 (MARYVFITGG…DSEVLSAFGI (265 aa)) is amidoligase domain. Residue Ser13 participates in CTP binding. Position 13 (Ser13) interacts with UTP. Residue 14-19 (SLGKGI) participates in ATP binding. An L-glutamine-binding site is contributed by Tyr54. Residue Asp71 coordinates ATP. Mg(2+) contacts are provided by Asp71 and Glu139. Residues 146-148 (DIE), 186-191 (KTKPTQ), and Lys222 each bind CTP. Residues 186–191 (KTKPTQ) and Lys222 contribute to the UTP site. The 251-residue stretch at 291-541 (TIAVVGKYTG…IEAAIEQSRL (251 aa)) folds into the Glutamine amidotransferase type-1 domain. Gly353 is a binding site for L-glutamine. The active-site Nucleophile; for glutamine hydrolysis is Cys380. Residues 381–384 (FGMQ), Glu404, and Arg469 each bind L-glutamine. Catalysis depends on residues His514 and Glu516.

This sequence belongs to the CTP synthase family. As to quaternary structure, homotetramer.

The catalysed reaction is UTP + L-glutamine + ATP + H2O = CTP + L-glutamate + ADP + phosphate + 2 H(+). It carries out the reaction L-glutamine + H2O = L-glutamate + NH4(+). The enzyme catalyses UTP + NH4(+) + ATP = CTP + ADP + phosphate + 2 H(+). Its pathway is pyrimidine metabolism; CTP biosynthesis via de novo pathway; CTP from UDP: step 2/2. With respect to regulation, allosterically activated by GTP, when glutamine is the substrate; GTP has no effect on the reaction when ammonia is the substrate. The allosteric effector GTP functions by stabilizing the protein conformation that binds the tetrahedral intermediate(s) formed during glutamine hydrolysis. Inhibited by the product CTP, via allosteric rather than competitive inhibition. Catalyzes the ATP-dependent amination of UTP to CTP with either L-glutamine or ammonia as the source of nitrogen. Regulates intracellular CTP levels through interactions with the four ribonucleotide triphosphates. The protein is CTP synthase of Brucella suis (strain ATCC 23445 / NCTC 10510).